Reading from the N-terminus, the 956-residue chain is Isoleucine--tRNA ligase (956 aa).

The 'HIGH' region signature appears at 60-70 (PYANGHIHVGH). Residue glutamate 583 coordinates L-isoleucyl-5'-AMP. The 'KMSKS' region signature appears at 624–628 (KMSKS). Lysine 627 is an ATP binding site. Zn(2+) is bound by residues cysteine 921, cysteine 924, cysteine 938, and cysteine 941.

Belongs to the class-I aminoacyl-tRNA synthetase family. IleS type 1 subfamily. In terms of assembly, monomer. The cofactor is Zn(2+).

The protein resides in the cytoplasm. The catalysed reaction is tRNA(Ile) + L-isoleucine + ATP = L-isoleucyl-tRNA(Ile) + AMP + diphosphate. Catalyzes the attachment of isoleucine to tRNA(Ile). As IleRS can inadvertently accommodate and process structurally similar amino acids such as valine, to avoid such errors it has two additional distinct tRNA(Ile)-dependent editing activities. One activity is designated as 'pretransfer' editing and involves the hydrolysis of activated Val-AMP. The other activity is designated 'posttransfer' editing and involves deacylation of mischarged Val-tRNA(Ile). The chain is Isoleucine--tRNA ligase from Aquifex aeolicus (strain VF5).